The sequence spans 290 residues: Porphobilinogen deaminase (290 aa).

Cys-237 is modified (S-(dipyrrolylmethanemethyl)cysteine).

Belongs to the HMBS family. Monomer. It depends on dipyrromethane as a cofactor.

The catalysed reaction is 4 porphobilinogen + H2O = hydroxymethylbilane + 4 NH4(+). It functions in the pathway porphyrin-containing compound metabolism; protoporphyrin-IX biosynthesis; coproporphyrinogen-III from 5-aminolevulinate: step 2/4. Tetrapolymerization of the monopyrrole PBG into the hydroxymethylbilane pre-uroporphyrinogen in several discrete steps. The protein is Porphobilinogen deaminase of Clostridium botulinum (strain Kyoto / Type A2).